A 146-amino-acid chain; its full sequence is Hemoglobin subunit beta (146 aa).

The 145-residue stretch at 2–146 (QWSESERTII…VVSALGKQYH (145 aa)) folds into the Globin domain. Heme b contacts are provided by His-63 and His-92.

The protein belongs to the globin family. In terms of assembly, heterotetramer of two alpha chains and two beta chains. As to expression, red blood cells.

Functionally, involved in oxygen transport from gills to the various peripheral tissues. This is Hemoglobin subunit beta (hbb) from Pogonophryne scotti (Saddleback plunderfish).